Reading from the N-terminus, the 57-residue chain is MQPRSPVRTNIVIFTILGFVVALLIHFIVLSSPEYNWLSNAEGGALLLSAARALFGI.

M1 carries the post-translational modification N-formylmethionine. The Cytoplasmic portion of the chain corresponds to 1–10; the sequence is MQPRSPVRTN. A helical membrane pass occupies residues 11 to 30; sequence IVIFTILGFVVALLIHFIVL. H26 contacts a bacteriochlorophyll. Residues 31–57 are Periplasmic-facing; that stretch reads SSPEYNWLSNAEGGALLLSAARALFGI.

This sequence belongs to the antenna complex alpha subunit family. As to quaternary structure, the core complex is formed by different alpha and beta chains, binding bacteriochlorophyll molecules, and arranged most probably in tetrameric structures disposed around the reaction center. The non-pigmented gamma chains may constitute additional components.

It is found in the cell membrane. Functionally, antenna complexes are light-harvesting systems, which transfer the excitation energy to the reaction centers. In Chloroflexus aurantiacus (strain ATCC 29366 / DSM 635 / J-10-fl), this protein is Light-harvesting protein B-808/866 alpha chain (puf2A).